A 147-amino-acid chain; its full sequence is MKLHDLRPAKDAKKKRKRVGRGTGSGRGFTSGRGSKGQNARSGGGVRPTFEGGQTPLFRKLPKKGFNNIFKKVYNEVNVYQLNKFNKGEEVTPEKLLEKGIIDKVARSGVKILGNGELDKALTVKAHAFTKSAREKIEAAGGKAEVI.

Positions 1 to 11 (MKLHDLRPAKD) are enriched in basic and acidic residues. Positions 1-57 (MKLHDLRPAKDAKKKRKRVGRGTGSGRGFTSGRGSKGQNARSGGGVRPTFEGGQTPL) are disordered. Positions 21–35 (RGTGSGRGFTSGRGS) are enriched in gly residues.

The protein belongs to the universal ribosomal protein uL15 family. Part of the 50S ribosomal subunit.

In terms of biological role, binds to the 23S rRNA. The protein is Large ribosomal subunit protein uL15 of Halothermothrix orenii (strain H 168 / OCM 544 / DSM 9562).